Reading from the N-terminus, the 66-residue chain is uncharacterized protein (66 aa).

This is an uncharacterized protein from Chlamydia pneumoniae (Chlamydophila pneumoniae).